The following is a 163-amino-acid chain: MNHYVTPDLCDAYPDLVQVLEPMFSNFGGRDSFGGEIVTLKCFEDNSLVKEQADQPGAGKVLVVDGGGSLRRALLGDMIAEKAAKNGWEGLVIYGCIRDVDVIAQTDLGVQALASHPMKTDKRGIGDLNVVVTFAGVTFRPGEYIYADNNGVIVSPSPLKMPE.

Substrate-binding positions include 76–79 (GDMI) and arginine 98. Aspartate 99 provides a ligand contact to a divalent metal cation.

The protein belongs to the class II aldolase/RraA-like family. As to quaternary structure, homotrimer. A divalent metal cation is required as a cofactor.

It carries out the reaction 4-hydroxy-4-methyl-2-oxoglutarate = 2 pyruvate. The enzyme catalyses oxaloacetate + H(+) = pyruvate + CO2. Catalyzes the aldol cleavage of 4-hydroxy-4-methyl-2-oxoglutarate (HMG) into 2 molecules of pyruvate. Also contains a secondary oxaloacetate (OAA) decarboxylase activity due to the common pyruvate enolate transition state formed following C-C bond cleavage in the retro-aldol and decarboxylation reactions. The protein is Putative 4-hydroxy-4-methyl-2-oxoglutarate aldolase of Pseudomonas fluorescens (strain SBW25).